Here is a 118-residue protein sequence, read N- to C-terminus: Small ribosomal subunit protein uS13 (118 aa).

The tract at residues 94–118 (GLPLRGQRTRTNARTRKGPRRPIRK) is disordered.

The protein belongs to the universal ribosomal protein uS13 family. As to quaternary structure, part of the 30S ribosomal subunit. Forms a loose heterodimer with protein S19. Forms two bridges to the 50S subunit in the 70S ribosome.

Functionally, located at the top of the head of the 30S subunit, it contacts several helices of the 16S rRNA. In the 70S ribosome it contacts the 23S rRNA (bridge B1a) and protein L5 of the 50S subunit (bridge B1b), connecting the 2 subunits; these bridges are implicated in subunit movement. Contacts the tRNAs in the A and P-sites. This chain is Small ribosomal subunit protein uS13, found in Thioalkalivibrio sulfidiphilus (strain HL-EbGR7).